The primary structure comprises 197 residues: Peptidyl-tRNA hydrolase (197 aa).

Tyr21 contributes to the tRNA binding site. The active-site Proton acceptor is the His26. 3 residues coordinate tRNA: Tyr72, Asn74, and Asn120.

This sequence belongs to the PTH family. As to quaternary structure, monomer.

Its subcellular location is the cytoplasm. The enzyme catalyses an N-acyl-L-alpha-aminoacyl-tRNA + H2O = an N-acyl-L-amino acid + a tRNA + H(+). In terms of biological role, hydrolyzes ribosome-free peptidyl-tRNAs (with 1 or more amino acids incorporated), which drop off the ribosome during protein synthesis, or as a result of ribosome stalling. Functionally, catalyzes the release of premature peptidyl moieties from peptidyl-tRNA molecules trapped in stalled 50S ribosomal subunits, and thus maintains levels of free tRNAs and 50S ribosomes. This is Peptidyl-tRNA hydrolase from Alkalilimnicola ehrlichii (strain ATCC BAA-1101 / DSM 17681 / MLHE-1).